A 341-amino-acid polypeptide reads, in one-letter code: Glycerol-3-phosphate dehydrogenase [NAD(P)+] (341 aa).

NADPH contacts are provided by S11, W12, R33, and K106. Residues K106, G137, and S139 each coordinate sn-glycerol 3-phosphate. An NADPH-binding site is contributed by A141. Sn-glycerol 3-phosphate is bound by residues K192, D245, S255, R256, and N257. Residue K192 is the Proton acceptor of the active site. R256 contacts NADPH. Residues V280 and E282 each coordinate NADPH.

This sequence belongs to the NAD-dependent glycerol-3-phosphate dehydrogenase family.

It localises to the cytoplasm. It carries out the reaction sn-glycerol 3-phosphate + NAD(+) = dihydroxyacetone phosphate + NADH + H(+). The enzyme catalyses sn-glycerol 3-phosphate + NADP(+) = dihydroxyacetone phosphate + NADPH + H(+). Its pathway is membrane lipid metabolism; glycerophospholipid metabolism. Catalyzes the reduction of the glycolytic intermediate dihydroxyacetone phosphate (DHAP) to sn-glycerol 3-phosphate (G3P), the key precursor for phospholipid synthesis. This is Glycerol-3-phosphate dehydrogenase [NAD(P)+] from Bacillus cytotoxicus (strain DSM 22905 / CIP 110041 / 391-98 / NVH 391-98).